Consider the following 683-residue polypeptide: Transforming growth factor-beta-induced protein ig-h3 (683 aa).

Residues 1–23 (MALLMRLLTLALALSVGPAGTLA) form the signal peptide. Position 37 is a phosphoserine (S37). In terms of domain architecture, EMI spans 45 to 99 (GPNVCAVQKVIGTNKKYFTNCKQWYQRKICGKSTVISYECCPGYEKVPGEKGCPA). 5 disulfides stabilise this stretch: C49/C85, C74/C339, C84/C97, C214/C317, and C473/C478. C65 is subject to S-cysteinyl cysteine. FAS1 domains follow at residues 103-236 (LSNL…DKVI), 240-371 (TNNI…DELL), 375-498 (SAKT…DRML), and 502-632 (MGTV…NTVL). The Cell attachment site signature appears at 642 to 644 (RGD).

As to quaternary structure, binds to type I, II, and IV collagens. Post-translationally, gamma-carboxylation is controversial. Gamma-carboxyglutamated; gamma-carboxyglutamate residues are formed by vitamin K dependent carboxylation; this may be required for calcium binding. According to a more recent report, does not contain vitamin K-dependent gamma-carboxyglutamate residues. The EMI domain contains 2 expected intradomain disulfide bridges (Cys-49-Cys85 and Cys-84-Cys-97) and one unusual interdomain disulfide bridge to the second FAS1 domain (Cys-74-Cys-339). This arrangement violates the predicted disulfide bridge pattern of an EMI domain. In terms of tissue distribution, expressed in heart, kidney, liver, skeletal muscle, testis, thyroid and uterus.

It localises to the secreted. It is found in the extracellular space. The protein localises to the extracellular matrix. In terms of biological role, plays a role in cell adhesion. May play a role in cell-collagen interactions. In Mus musculus (Mouse), this protein is Transforming growth factor-beta-induced protein ig-h3 (Tgfbi).